The following is a 199-amino-acid chain: Pre-histone-like nucleoprotein (199 aa).

The residue at position 2 (S2) is an N-acetylserine; by host. Residues 2–23 (SILISPSDNTGWGLGTGKMYGG) constitute a propeptide that is removed on maturation. K26 carries the post-translational modification N6-acetyllysine; by host. The Nuclear localization signal signature appears at 189 to 199 (RRKASVRRRRT).

The protein belongs to the adenoviridae histone-like nucleoprotein family. Interacts with the core-capsid bridging protein; this interaction bridges the virus core to the capsid. Interacts with host NPM1; this interaction might play a role in placing the pre-histone-like nucleoprotein on the viral DNA or regulating viral gene expression. Interacts with host HMGB1; this interaction inhibits host immune response. In terms of processing, cleaved near the N-terminus by the viral protease during virion maturation to form the mature protein.

Its subcellular location is the virion. It is found in the host nucleus. The protein localises to the host nucleolus. In terms of biological role, plays a role in the inhibition of host immune response within the nucleus. Interacts with cellular nucleosomes and immobilizes the host immune danger signal HMGB1 on chromatin. In turn, prevents HMGB1 release out of the cell and thus decreases inflammation. Also plays a role in the wrapping and condensation of the viral DNA. May also promote viral genome import into the nucleus. The protein is Pre-histone-like nucleoprotein of Murine adenovirus A serotype 1 (MAdV-1).